We begin with the raw amino-acid sequence, 490 residues long: Myocilin (490 aa).

A signal peptide spans 1-18 (MPAVQLLLLACLLGGVGA). A coiled-coil region spans residues 51 to 170 (GQAMLAIQEL…QEVASLRRGQ (120 aa)). A disordered region spans residues 152-186 (LARRLESSSQEVASLRRGQCPQAHSSSQDVPSGSR). Residues 173 to 182 (QAHSSSQDVP) are compositionally biased toward polar residues. One can recognise an Olfactomedin-like domain in the interval 230–489 (GCGELVWVGE…MVSYDIKLSR (260 aa)). The cysteines at positions 231 and 419 are disulfide-linked. Positions 366, 414, 415, 463, and 464 each coordinate Ca(2+). A Microbody targeting signal motif is present at residues 488–490 (SRL).

In terms of assembly, homodimer (via N-terminus). Can also form higher oligomers. Interacts with OLFM3, FN1, NRCAM, GLDN and NFASC. Interacts (via N-terminus) with MYL2. Interacts with SFRP1, FRZB, FZD7, FZD10, FZD1 and WIF1; regulates Wnt signaling. Interacts with SNTA1; regulates muscle hypertrophy. Interacts with ERBB2 and ERBB3; activates ERBB2-ERBB3 signaling pathway. Interacts with SNCG; affects its secretion and its aggregation. Post-translationally, palmitoylated. In terms of processing, undergoes a calcium-dependent proteolytic cleavage at Gln-212 by CAPN2 in the endoplasmic reticulum. The result is the production of two fragments, one of 35 kDa containing the C-terminal olfactomedin-like domain, and another of 20 kDa containing the N-terminal leucine zipper-like domain. Glycosylated. As to expression, the myocilin 35 kDa fragment is detected in iris and ciliary body.

The protein localises to the secreted. The protein resides in the golgi apparatus. It localises to the cytoplasmic vesicle. It is found in the extracellular space. Its subcellular location is the extracellular matrix. The protein localises to the extracellular exosome. The protein resides in the mitochondrion. It localises to the mitochondrion intermembrane space. It is found in the mitochondrion inner membrane. Its subcellular location is the mitochondrion outer membrane. The protein localises to the rough endoplasmic reticulum. The protein resides in the cell projection. It localises to the cilium. It is found in the endoplasmic reticulum. Secreted glycoprotein regulating the activation of different signaling pathways in adjacent cells to control different processes including cell adhesion, cell-matrix adhesion, cytoskeleton organization and cell migration. Promotes substrate adhesion, spreading and formation of focal contacts. Negatively regulates cell-matrix adhesion and stress fiber assembly through Rho protein signal transduction. Modulates the organization of actin cytoskeleton by stimulating the formation of stress fibers through interactions with components of Wnt signaling pathways. Promotes cell migration through activation of PTK2 and the downstream phosphatidylinositol 3-kinase signaling. Plays a role in bone formation and promotes osteoblast differentiation in a dose-dependent manner through mitogen-activated protein kinase signaling. Mediates myelination in the peripheral nervous system through ERBB2/ERBB3 signaling. Plays a role as a regulator of muscle hypertrophy through the components of dystrophin-associated protein complex. Involved in positive regulation of mitochondrial depolarization. Plays a role in neurite outgrowth. May participate in the obstruction of fluid outflow in the trabecular meshwork. This is Myocilin (MYOC) from Bos taurus (Bovine).